The chain runs to 607 residues: UvrABC system protein C (607 aa).

Residues 16–94 form the GIY-YIG domain; sequence GRPGVYRMFD…IKEWRPPYNI (79 aa). Residues 203 to 238 form the UVR domain; that stretch reads NALSDELNASMEKAAMALDFERAAELRDQVALLRRV.

The protein belongs to the UvrC family. In terms of assembly, interacts with UvrB in an incision complex.

The protein resides in the cytoplasm. Its function is as follows. The UvrABC repair system catalyzes the recognition and processing of DNA lesions. UvrC both incises the 5' and 3' sides of the lesion. The N-terminal half is responsible for the 3' incision and the C-terminal half is responsible for the 5' incision. This is UvrABC system protein C from Pseudomonas syringae pv. tomato (strain ATCC BAA-871 / DC3000).